Consider the following 443-residue polypeptide: Xaa-Pro dipeptidase (443 aa).

The Mn(2+) site is built by Asp246, Asp257, His339, Glu384, and Glu423.

This sequence belongs to the peptidase M24B family. Bacterial-type prolidase subfamily. The cofactor is Mn(2+).

The catalysed reaction is Xaa-L-Pro dipeptide + H2O = an L-alpha-amino acid + L-proline. In terms of biological role, splits dipeptides with a prolyl residue in the C-terminal position. This is Xaa-Pro dipeptidase from Escherichia coli O81 (strain ED1a).